Reading from the N-terminus, the 147-residue chain is Small ribosomal subunit protein eS19 (147 aa).

The protein belongs to the eukaryotic ribosomal protein eS19 family. As to quaternary structure, component of the small ribosomal subunit.

Its subcellular location is the cytoplasm. The protein resides in the nucleus. Functionally, component of the small ribosomal subunit. The ribosome is a large ribonucleoprotein complex responsible for the synthesis of proteins in the cell. Required for pre-rRNA processing and maturation of 40S ribosomal subunits. This chain is Small ribosomal subunit protein eS19 (rps19), found in Ictalurus punctatus (Channel catfish).